A 279-amino-acid chain; its full sequence is MTTRIDTKFAELKAEGRPALVTYFMGGDPDLETALKVMKALPKAGADVIELGMPFSDPMADGPAIQAAGLRPLNAGQTLAKTLYMAAEFRKEDDTTPIVMMGYYNPIYVYGVERFLTDAKASGVDGLIVVDLPSEMDAELCIPAMKAGINFIRLTTPTTDDKRLPKVLHNSSGFVYYVSMNGITGAAIADTAKVGEAVRHIKKSTDLPICVGFGVKTPEQAAAIATHADGVVVGTAIVNAIAGELDEKGKVKGDPVAAATRLVHALAESVRATRLEAAQ.

Catalysis depends on proton acceptor residues E50 and D61.

Belongs to the TrpA family. In terms of assembly, tetramer of two alpha and two beta chains.

It catalyses the reaction (1S,2R)-1-C-(indol-3-yl)glycerol 3-phosphate + L-serine = D-glyceraldehyde 3-phosphate + L-tryptophan + H2O. Its pathway is amino-acid biosynthesis; L-tryptophan biosynthesis; L-tryptophan from chorismate: step 5/5. Functionally, the alpha subunit is responsible for the aldol cleavage of indoleglycerol phosphate to indole and glyceraldehyde 3-phosphate. This is Tryptophan synthase alpha chain from Brucella ovis (strain ATCC 25840 / 63/290 / NCTC 10512).